Reading from the N-terminus, the 657-residue chain is Folic acid synthesis protein FOL1 (657 aa).

The tract at residues 1–116 (MDKIIIKDLL…WPGVQIERTL (116 aa)) is DHNA. Residues 149–274 (YLAFGSNLGD…FVLLPLSDIA (126 aa)) are HPPK. The 309-residue stretch at 333–641 (TFIMGILNVT…DIPEIRDAML (309 aa)) folds into the Pterin-binding domain. Residues 335–657 (IMGILNVTPD…KPQRRYQIQK (323 aa)) are DHPS. N340 contributes to the Mg(2+) binding site. T380, D416, and N435 together coordinate (7,8-dihydropterin-6-yl)methyl diphosphate. The tract at residues 466–524 (LNNSNDSNSNSSINTNGEDNNNNNNNNNNNNNNNNNNNNNNNNNDDNDNDNRSKIKQKI) is disordered. Residues 467–509 (NNSNDSNSNSSINTNGEDNNNNNNNNNNNNNNNNNNNNNNNNN) are compositionally biased toward low complexity. Residues 514–524 (NDNRSKIKQKI) show a composition bias toward basic and acidic residues. Residues D547, K583, and 629 to 631 (RIH) each bind (7,8-dihydropterin-6-yl)methyl diphosphate.

The protein in the N-terminal section; belongs to the DHNA family. In the central section; belongs to the HPPK family. It in the C-terminal section; belongs to the DHPS family. Mg(2+) is required as a cofactor.

The enzyme catalyses 7,8-dihydroneopterin = 6-hydroxymethyl-7,8-dihydropterin + glycolaldehyde. The catalysed reaction is 6-hydroxymethyl-7,8-dihydropterin + ATP = (7,8-dihydropterin-6-yl)methyl diphosphate + AMP + H(+). It catalyses the reaction (7,8-dihydropterin-6-yl)methyl diphosphate + 4-aminobenzoate = 7,8-dihydropteroate + diphosphate. The protein operates within cofactor biosynthesis; tetrahydrofolate biosynthesis; 2-amino-4-hydroxy-6-hydroxymethyl-7,8-dihydropteridine diphosphate from 7,8-dihydroneopterin triphosphate: step 3/4. Its pathway is cofactor biosynthesis; tetrahydrofolate biosynthesis; 2-amino-4-hydroxy-6-hydroxymethyl-7,8-dihydropteridine diphosphate from 7,8-dihydroneopterin triphosphate: step 4/4. It participates in cofactor biosynthesis; tetrahydrofolate biosynthesis; 7,8-dihydrofolate from 2-amino-4-hydroxy-6-hydroxymethyl-7,8-dihydropteridine diphosphate and 4-aminobenzoate: step 1/2. Catalyzes three sequential steps of tetrahydrofolate biosynthesis. In Dictyostelium discoideum (Social amoeba), this protein is Folic acid synthesis protein FOL1 (fol1).